The chain runs to 438 residues: UDP-N-acetylmuramoylalanine--D-glutamate ligase (438 aa).

112–118 (GSNGKST) provides a ligand contact to ATP.

It belongs to the MurCDEF family.

The protein localises to the cytoplasm. It carries out the reaction UDP-N-acetyl-alpha-D-muramoyl-L-alanine + D-glutamate + ATP = UDP-N-acetyl-alpha-D-muramoyl-L-alanyl-D-glutamate + ADP + phosphate + H(+). Its pathway is cell wall biogenesis; peptidoglycan biosynthesis. Functionally, cell wall formation. Catalyzes the addition of glutamate to the nucleotide precursor UDP-N-acetylmuramoyl-L-alanine (UMA). This Escherichia coli O6:K15:H31 (strain 536 / UPEC) protein is UDP-N-acetylmuramoylalanine--D-glutamate ligase.